A 198-amino-acid polypeptide reads, in one-letter code: Outer-membrane lipoprotein carrier protein (198 aa).

A signal peptide spans 1 to 17 (MKKILLSLCFLSSVAFA).

Belongs to the LolA family. In terms of assembly, monomer.

It is found in the periplasm. Participates in the translocation of lipoproteins from the inner membrane to the outer membrane. Only forms a complex with a lipoprotein if the residue after the N-terminal Cys is not an aspartate (The Asp acts as a targeting signal to indicate that the lipoprotein should stay in the inner membrane). The chain is Outer-membrane lipoprotein carrier protein from Aliivibrio salmonicida (strain LFI1238) (Vibrio salmonicida (strain LFI1238)).